Consider the following 492-residue polypeptide: Adenylyltransferase and sulfurtransferase uba4 (492 aa).

ATP contacts are provided by residues G99, D120, 127–131 (SNLHR), K144, and 188–189 (DN). C237 and C240 together coordinate Zn(2+). C254 functions as the Glycyl thioester intermediate; for adenylyltransferase activity in the catalytic mechanism. The Zn(2+) site is built by C317 and C320. The Rhodanese domain maps to 378–490 (GSKEPTIIDV…WREQIDPDWP (113 aa)). Catalysis depends on C445, which acts as the Cysteine persulfide intermediate; for sulfurtransferase activity.

This sequence in the N-terminal section; belongs to the HesA/MoeB/ThiF family. UBA4 subfamily. Requires Zn(2+) as cofactor.

It localises to the cytoplasm. The protein localises to the cytosol. The enzyme catalyses [molybdopterin-synthase sulfur-carrier protein]-C-terminal Gly-Gly + ATP + H(+) = [molybdopterin-synthase sulfur-carrier protein]-C-terminal Gly-Gly-AMP + diphosphate. It catalyses the reaction [molybdopterin-synthase sulfur-carrier protein]-C-terminal Gly-Gly-AMP + S-sulfanyl-L-cysteinyl-[cysteine desulfurase] + AH2 = [molybdopterin-synthase sulfur-carrier protein]-C-terminal-Gly-aminoethanethioate + L-cysteinyl-[cysteine desulfurase] + A + AMP + 2 H(+). The protein operates within tRNA modification; 5-methoxycarbonylmethyl-2-thiouridine-tRNA biosynthesis. It functions in the pathway cofactor biosynthesis; molybdopterin biosynthesis. Plays a central role in 2-thiolation of mcm(5)S(2)U at tRNA wobble positions of cytosolic tRNA(Lys), tRNA(Glu) and tRNA(Gln). Also essential during biosynthesis of the molybdenum cofactor. Acts by mediating the C-terminal thiocarboxylation of sulfur carriers urm1 and mocs2a. Its N-terminus first activates urm1 and mocs2a as acyl-adenylates (-COAMP), then the persulfide sulfur on the catalytic cysteine is transferred to urm1 and mocs2a to form thiocarboxylation (-COSH) of their C-terminus. The reaction probably involves hydrogen sulfide that is generated from the persulfide intermediate and that acts as a nucleophile towards urm1 and mocs2a. Subsequently, a transient disulfide bond is formed. Does not use thiosulfate as sulfur donor; nfs1 probably acting as a sulfur donor for thiocarboxylation reactions. The polypeptide is Adenylyltransferase and sulfurtransferase uba4 (Aspergillus clavatus (strain ATCC 1007 / CBS 513.65 / DSM 816 / NCTC 3887 / NRRL 1 / QM 1276 / 107)).